The primary structure comprises 446 residues: ATP synthase subunit b-delta (446 aa).

The interval 1-168 is ATP synthase subunit b; it reads MSTFIGQLVG…PAAADVQYPL (168 aa). A helical membrane pass occupies residues 4–24; it reads FIGQLVGFAAIVFLVVRYVVP. The segment at 169–446 is ATP synthase subunit delta; that stretch reads MTKMRSSSRV…LAAAEAQLPD (278 aa).

It in the N-terminal section; belongs to the ATPase B chain family. The protein in the C-terminal section; belongs to the ATPase delta chain family. As to quaternary structure, F-type ATPases have 2 components, F(1) - the catalytic core - and F(0) - the membrane proton channel. F(1) has five subunits: alpha(3), beta(3), gamma(1), delta(1), epsilon(1). F(0) has three main subunits: a(1), b(2) and c(10-14). The alpha and beta chains form an alternating ring which encloses part of the gamma chain. F(1) is attached to F(0) by a central stalk formed by the gamma and epsilon chains, while a peripheral stalk is formed by the delta and b chains.

It is found in the cell membrane. Its function is as follows. F(1)F(0) ATP synthase produces ATP from ADP in the presence of a proton or sodium gradient. F-type ATPases consist of two structural domains, F(1) containing the extramembraneous catalytic core and F(0) containing the membrane proton channel, linked together by a central stalk and a peripheral stalk. During catalysis, ATP synthesis in the catalytic domain of F(1) is coupled via a rotary mechanism of the central stalk subunits to proton translocation. This fusion protein includes a component of the F(0) channel (subunit b) and of the F(1) subunit (subunit delta). Two copies of subunit b and one of delta together form the peripheral 'stator' stalk which links F(1) to F(0). In Mycobacterium avium (strain 104), this protein is ATP synthase subunit b-delta (atpFH).